The following is a 224-amino-acid chain: tRNA (guanine-N(7)-)-methyltransferase (224 aa).

S-adenosyl-L-methionine-binding residues include E56, E81, D108, and D131. The active site involves D131. Substrate contacts are provided by residues K135, D167, and 202 to 205; that span reads TKFE.

The protein belongs to the class I-like SAM-binding methyltransferase superfamily. TrmB family.

The enzyme catalyses guanosine(46) in tRNA + S-adenosyl-L-methionine = N(7)-methylguanosine(46) in tRNA + S-adenosyl-L-homocysteine. It participates in tRNA modification; N(7)-methylguanine-tRNA biosynthesis. In terms of biological role, catalyzes the formation of N(7)-methylguanine at position 46 (m7G46) in tRNA. The polypeptide is tRNA (guanine-N(7)-)-methyltransferase (Nitrosomonas europaea (strain ATCC 19718 / CIP 103999 / KCTC 2705 / NBRC 14298)).